The sequence spans 1906 residues: Serine protease/ABC transporter B family protein tagB (1906 aa).

The N-terminal stretch at 1–31 (MKFQFSSPSKIFLFSSVILILIFIGIKFELL) is a signal peptide. The segment at 96 to 134 (INNNNNNNNKLNNNNNNNNNNNNNNNNNNNNNNNNNNNN) is disordered. The region spanning 356–763 (PTVIFGTKDK…ASSTNPSNAI (408 aa)) is the Peptidase S8 domain. Catalysis depends on charge relay system residues Asp387 and His432. N-linked (GlcNAc...) asparagine glycosylation is found at Asn594, Asn621, and Asn672. The Charge relay system role is filled by Ser695. Residues Asn747 and Asn823 are each glycosylated (N-linked (GlcNAc...) asparagine). 3 helical membrane passes run 1011–1031 (YIII…LMWI), 1076–1096 (FIIE…ASIL), and 1121–1141 (FIII…GSWI). Positions 1080-1363 (LTIATACSLV…LFGVYVSYIQ (284 aa)) constitute an ABC transmembrane type-1 domain. Asn1172 carries N-linked (GlcNAc...) asparagine glycosylation. 3 consecutive transmembrane segments (helical) span residues 1210 to 1230 (LVFI…AVPI), 1309 to 1329 (WLLI…LVIQ), and 1332 to 1352 (FTVG…DASS). The segment at 1385-1455 (LEEEEADRLA…NNNNNIGNLD (71 aa)) is disordered. The span at 1396–1405 (LSGGGGGGGD) shows a compositional bias: gly residues. The segment covering 1407-1420 (GDDKKDKQNIENGK) has biased composition (basic and acidic residues). An ABC transporter domain is found at 1518–1756 (IEFKNVSFRY…KGKYYRMFSE (239 aa)). Residue Asn1522 is glycosylated (N-linked (GlcNAc...) asparagine). An ATP-binding site is contributed by 1553–1560 (GPSGSGKS). Asn1658 carries an N-linked (GlcNAc...) asparagine glycan. The interval 1757-1906 (DKDDTPLQNN…QMDEENDEER (150 aa)) is disordered. 2 stretches are compositionally biased toward low complexity: residues 1765 to 1779 (NNNN…NNNN) and 1814 to 1871 (EQQE…DYDQ). Over residues 1872-1886 (VPPPPPLPSESPSPP) the composition is skewed to pro residues.

The protein in the C-terminal section; belongs to the ABC transporter superfamily. ABCB family. Multidrug resistance exporter (TC 3.A.1.201) subfamily. This sequence in the N-terminal section; belongs to the peptidase S8 family.

It localises to the membrane. In terms of biological role, intercellular communication via tagB may mediate integration of cellular differentiation with morphogenesis. In Dictyostelium discoideum (Social amoeba), this protein is Serine protease/ABC transporter B family protein tagB (tagB).